The chain runs to 354 residues: Rhodopsin (354 aa).

The Extracellular portion of the chain corresponds to 1–36 (MNGTEGPMFYVPMSNATGVVKSPYDYPQYYLVAPWA). N-linked (GlcNAc...) asparagine glycosylation is found at N2 and N15. A helical transmembrane segment spans residues 37–61 (YGCLAAYMFFLIITGFPINFLTLYV). The Cytoplasmic segment spans residues 62-73 (TIEHKKLRTPLN). A helical membrane pass occupies residues 74 to 96 (YILLNLAISDLFMVFGGFTTTMY). At 97-110 (TSLHGYFVFGRIGC) the chain is on the extracellular side. Cysteines 110 and 187 form a disulfide. Residues 111–133 (NLEGFFATLGGEMGLWSLVVLAF) traverse the membrane as a helical segment. Positions 134-136 (ERW) match the 'Ionic lock' involved in activated form stabilization motif. The Cytoplasmic portion of the chain corresponds to 134 to 152 (ERWMVVCKPVSNFRFGENH). The chain crosses the membrane as a helical span at residues 153-173 (AIMGVVFTWFMACTCAVPPLV). The Extracellular segment spans residues 174-202 (GWSRYIPEGMQCSCGVDYYTRAPGYNNES). A helical membrane pass occupies residues 203 to 224 (FVIYMFLVHFIIPLIVIFFCYG). At 225–252 (RLVCTVKDAAAQQQESETTQRAEREVTR) the chain is on the cytoplasmic side. A helical membrane pass occupies residues 253-274 (MVVIMVIGFLICWIPYASVAWY). At 275-286 (IFTHQGSEFGPV) the chain is on the extracellular side. A helical membrane pass occupies residues 287–308 (FMTVPAFFAKSAAVYNPCIYIC). K296 is modified (N6-(retinylidene)lysine). Topologically, residues 309-354 (MNKQFRHCMITTLCCGKNPFEEEEGASTTASKTEASSVSSSSVSPA) are cytoplasmic. Residues C322 and C323 are each lipidated (S-palmitoyl cysteine). The disordered stretch occupies residues 333 to 354 (GASTTASKTEASSVSSSSVSPA). Low complexity predominate over residues 334–354 (ASTTASKTEASSVSSSSVSPA).

The protein belongs to the G-protein coupled receptor 1 family. Opsin subfamily. Post-translationally, phosphorylated on some or all of the serine and threonine residues present in the C-terminal region. In terms of processing, contains one covalently linked retinal chromophore.

The protein resides in the membrane. It is found in the cell projection. It localises to the cilium. The protein localises to the photoreceptor outer segment. Its function is as follows. Photoreceptor required for image-forming vision at low light intensity. While most salt water fish species use retinal as chromophore, most freshwater fish use 3-dehydroretinal, or a mixture of retinal and 3-dehydroretinal. Light-induced isomerization of 11-cis to all-trans retinal triggers a conformational change that activates signaling via G-proteins. Subsequent receptor phosphorylation mediates displacement of the bound G-protein alpha subunit by arrestin and terminates signaling. The sequence is that of Rhodopsin (rho) from Cyprinus carpio (Common carp).